We begin with the raw amino-acid sequence, 1292 residues long: Sorbin and SH3 domain-containing protein 1 (1292 aa).

4 disordered regions span residues 1–29, 73–158, 214–275, and 318–381; these read MSSE…ATAD, LRAS…AQPE, HLQR…SSPL, and REQQ…MDEV. A compositionally biased stretch (low complexity) spans 74–89; sequence RASSSYRETPSSSPAS. Threonine 82 bears the Phosphothreonine mark. Phosphoserine occurs at positions 86 and 89. Positions 93-102 are enriched in basic and acidic residues; sequence TRQHESKPGL. A phosphoserine mark is found at glutamate 105, leucine 114, valine 137, serine 146, serine 242, and serine 259. Residues 114–128 are compositionally biased toward polar residues; the sequence is LSSSADANGNAQPSS. Over residues 240–252 the composition is skewed to pro residues; it reads SFSPPPPLVPPAP. Residues 266-275 are compositionally biased toward polar residues; that stretch reads AVSSTDSSPL. Serine 341 is subject to Phosphoserine. Threonine 344 bears the Phosphothreonine mark. Phosphoserine occurs at positions 346 and 350. A compositionally biased stretch (basic and acidic residues) spans 354 to 365; it reads AIEKRAKDDSRR. The region spanning 366–469 is the SoHo domain; the sequence is VVKSTQDLSD…YSPRYSFSED (104 aa). Residues serine 369, serine 374, and asparagine 387 each carry the phosphoserine modification. A disordered region spans residues 405-534; the sequence is LNRDTPEENP…TRKYRAEPKS (130 aa). Over residues 437 to 450 the composition is skewed to polar residues; it reads YTPTYQFPASTPSP. 6 positions are modified to phosphoserine: serine 452, serine 465, aspartate 469, serine 472, arginine 478, and serine 481. Over residues 510 to 534 the composition is skewed to basic and acidic residues; sequence SSERNDWEPPDKKVDTRKYRAEPKS. Tyrosine 536 carries the phosphotyrosine; by ABL1 modification. Residues serine 556, asparagine 603, serine 609, and serine 640 each carry the phosphoserine modification. The disordered stretch occupies residues 628–650; that stretch reads APSANVPQSSAISPTPEISSETP. Tyrosine 654 is subject to Phosphotyrosine; by ABL1. Phosphoserine is present on residues serine 665 and lysine 700. The interval 692–716 is disordered; sequence PLQGLSGLKRPSSSASTKDSESPRH. At threonine 708 the chain carries Phosphothreonine. Residues serine 713, isoleucine 730, aspartate 735, and isoleucine 765 each carry the phosphoserine modification. One can recognise an SH3 1 domain in the interval 793-852; that stretch reads SEMRPARAKFDFKAQTLKELPLQKGDIVYIYKQIDQNWYEGEHHGRVGIFPRTYIELLPP. Residue threonine 862 is modified to Phosphothreonine. The SH3 2 domain occupies 867 to 928; it reads LEYGEAIAKF…PITYVDVIKR (62 aa). Valine 923 is modified (phosphoserine). Residue tyrosine 937 is modified to Phosphotyrosine. Over residues 944-954 the composition is skewed to low complexity; it reads SSPSRSATASP. Disordered regions lie at residues 944-976, 1041-1064, 1106-1150, and 1162-1230; these read SSPS…SRRA, SDRP…TYSL, QLSD…KKSC, and TEQR…SQTS. Phosphoserine occurs at positions 945 and 953. Residues 955–971 are compositionally biased toward polar residues; sequence QFSSHSKLITPAPSSLP. Over residues 1106 to 1117 the composition is skewed to polar residues; that stretch reads QLSDAFSSQSKR. Residues 1119-1136 show a composition bias toward basic and acidic residues; the sequence is PWREESGQYERKAERGAG. The span at 1162-1172 shows a compositional bias: polar residues; the sequence is TEQRLSDLNTP. A compositionally biased stretch (basic and acidic residues) spans 1192 to 1203; that stretch reads QTERHRGGEQAG. A compositionally biased stretch (polar residues) spans 1211–1230; that stretch reads GSQQPQAQQRRVTPDRSQTS. Position 1213 is a phosphoserine (glutamine 1213). Residues 1231-1292 enclose the SH3 3 domain; it reads QDLFSYQALY…PGNYVKPLYL (62 aa). Tyrosine 1240 is modified (phosphotyrosine; by ABL1).

As to quaternary structure, interacts (via third SH3 domain) with the Ten-1 ICD form of TENM1; the interaction induces the translocation of SORBS1 to the nucleus. Interacts with INSM1. Interacts with the long isoform of AFDN and with VCL. AFDN and VCL bind to SORBS1 in a competitive manner and do not form a ternary complex. Interacts with ABL1, CBL, CBLB and INPPL1/SHIP2 through the third SH3 domain. Interaction with ABL1 occurs only after insulin stimulation while this has no effect on the interaction with INPPL1. Interacts with the insulin receptor but dissociates from it following insulin stimulation. Also interacts with SCA7, PTK2/FAK1 and flotillin. Interacts (via SH3 domain 2) with PXN. Post-translationally, O-glycosylated. Detected in skeletal muscle (at protein level). Widely expressed with highest levels in heart and skeletal muscle.

It localises to the cell junction. The protein resides in the adherens junction. Its subcellular location is the cell membrane. It is found in the cytoplasm. The protein localises to the cytoskeleton. It localises to the focal adhesion. The protein resides in the nucleus. Its subcellular location is the nucleus matrix. Functionally, plays a role in tyrosine phosphorylation of CBL by linking CBL to the insulin receptor. Required for insulin-stimulated glucose transport. Involved in formation of actin stress fibers and focal adhesions. The polypeptide is Sorbin and SH3 domain-containing protein 1 (Homo sapiens (Human)).